The following is a 217-amino-acid chain: Nucleolar protein 12 (217 aa).

Residues 34–98 adopt a coiled-coil conformation; the sequence is GFHKRKVERK…LVTAKTESVQ (65 aa). The tract at residues 122–217 is disordered; sequence LGLPLPEQGD…MTGKARHNGE (96 aa). A compositionally biased stretch (acidic residues) spans 130–141; the sequence is GDQDGSQEEEMS. Basic residues-rich tracts occupy residues 172-184 and 201-217; these read AHSR…KHPR and KTQR…HNGE.

This sequence belongs to the RRP17 family. In terms of assembly, interacts with KIAA1191. Expressed in brain, lung, spleen, kidney and heart.

Its subcellular location is the nucleus. It is found in the nucleolus. The protein resides in the cytoplasm. In terms of biological role, multifunctional RNA binding protein that plays a role in RNA metabolism and DNA maintenance. Participates in the resolution of DNA stress and the maintenance of genome integrity by localizing to sites of DNA insults. Also plays a role in proper nucleolar organization by limiting nucleolar size and regulating nucleolar number. Mechanistically, regulates the nucleolar levels of fibrillarin and nucleolin, two key players in pre-rRNA processing and ribosome assembly. This Mus musculus (Mouse) protein is Nucleolar protein 12 (Nol12).